The sequence spans 145 residues: MDMNFDLYMNGVVEQARNEIESAGYEQLTTAEDVDKVLKQDGTTLVMINSVCGCAGGIARPAASHALHYDVLPDRLVTVFAGQDKEATQRAREYFEGYAPSSPSFALVKDGKITEMIERHQIEGHDVMNVINQLQTLFNKYCEER.

This sequence belongs to the bacilliredoxin family.

The polypeptide is Bacilliredoxin SAOUHSC_01610 (Staphylococcus aureus (strain NCTC 8325 / PS 47)).